The sequence spans 89 residues: Small ribosomal subunit protein uS15 (89 aa).

It belongs to the universal ribosomal protein uS15 family. As to quaternary structure, part of the 30S ribosomal subunit. Forms a bridge to the 50S subunit in the 70S ribosome, contacting the 23S rRNA.

Its function is as follows. One of the primary rRNA binding proteins, it binds directly to 16S rRNA where it helps nucleate assembly of the platform of the 30S subunit by binding and bridging several RNA helices of the 16S rRNA. In terms of biological role, forms an intersubunit bridge (bridge B4) with the 23S rRNA of the 50S subunit in the ribosome. The protein is Small ribosomal subunit protein uS15 of Aliivibrio fischeri (strain ATCC 700601 / ES114) (Vibrio fischeri).